A 65-amino-acid polypeptide reads, in one-letter code: Metallothionein-like protein type 3 (65 aa).

This sequence belongs to the metallothionein superfamily. Type 15 family.

In terms of biological role, metallothioneins have a high content of cysteine residues that bind various heavy metals. The polypeptide is Metallothionein-like protein type 3 (Musa acuminata (Banana)).